The following is a 386-amino-acid chain: MPTAHFQHSIRYLNVTNMLIFSIISFLLIYQTNSVVTLSRIDPAGAVDMGFVDVSYNNFTIQSPIHVPDDGTITWCVSKINCKYDYDEVVGVTAAAFDVWSMTGLVFKPTSRCDRAHIRISFKRRYHGDSDFDGEGGLLAHAFLPNQGALSGDIHMDNDETFAFSFNDADYEGDNAPTSYFWTVLHEIGHTLGLQHSSSKQAIMYGFYVKRSFNNGAVTLSTDDMNGINELYHSNEQSTHQSTRHRPHRRPSPDGSCRDERVLRIRRCRRRDRRRRRPKESGELVLCRSVRCHRVHSRRADHLRRQLHMETRSKRTALRRLSIANDDCVGFTTRFRGYIGVRMDGVHRSRHRQRSASVRRNSLPAQCNFRTKRHLSRSLTTTLCTR.

An N-terminal signal peptide occupies residues 1 to 34; sequence MPTAHFQHSIRYLNVTNMLIFSIISFLLIYQTNS. N-linked (GlcNAc...) asparagine; by host glycans are attached at residues N14 and N58. H186 is a Zn(2+) binding site. The active site involves E187. Zn(2+)-binding residues include H190 and H196. Positions 235 to 258 are disordered; the sequence is NEQSTHQSTRHRPHRRPSPDGSCR.

Belongs to the peptidase M10A family. Zn(2+) serves as cofactor.

The protein is Putative matrix metalloproteinase of Spodoptera frugiperda (Fall armyworm).